A 241-amino-acid polypeptide reads, in one-letter code: Phosphoadenosine 5'-phosphosulfate reductase (241 aa).

Cysteine 235 serves as the catalytic Nucleophile; cysteine thiosulfonate intermediate.

It belongs to the PAPS reductase family. CysH subfamily.

It is found in the cytoplasm. It carries out the reaction [thioredoxin]-disulfide + sulfite + adenosine 3',5'-bisphosphate + 2 H(+) = [thioredoxin]-dithiol + 3'-phosphoadenylyl sulfate. The protein operates within sulfur metabolism; hydrogen sulfide biosynthesis; sulfite from sulfate: step 3/3. Its function is as follows. Catalyzes the formation of sulfite from phosphoadenosine 5'-phosphosulfate (PAPS) using thioredoxin as an electron donor. This chain is Phosphoadenosine 5'-phosphosulfate reductase, found in Xanthomonas axonopodis pv. citri (strain 306).